We begin with the raw amino-acid sequence, 1937 residues long: Collagen-like protein 7 (1937 aa).

Asparagine 6 and asparagine 21 each carry an N-linked (GlcNAc...) asparagine; by host glycan. Disordered stretches follow at residues 88–248 (CKGN…KGDK), 294–531 (NLKG…PDLG), 583–643 (LKGD…NQGV), and 670–1144 (IKGD…DTAT). Collagen-like domains are found at residues 102 to 161 (GPKG…KGEK), 168 to 227 (GEKG…KGDI), 297 to 356 (GEKG…KGEK), 363 to 422 (GDKG…IGEK), and 453 to 512 (GDKG…KGDK). The segment covering 296–514 (KGEKGDKGNK…DKGDKGDKGD (219 aa)) has biased composition (basic and acidic residues). A glycan (N-linked (GlcNAc...) asparagine; by host) is linked at asparagine 515. Basic and acidic residues-rich tracts occupy residues 584–605 (KGDKGDKGINGNKGDKGEKGDK), 614–625 (KGEKGDKGDKGD), and 670–899 (IKGD…KGDK). 5 Collagen-like domains span residues 672-731 (GDKG…KGDK), 735-854 (GNKG…KGNI), 867-926 (GLKG…KGDK), 936-995 (GIKG…KGDK), and 1023-1142 (GSKG…KGDT). Asparagine 902 carries an N-linked (GlcNAc...) asparagine; by host glycan. The span at 907-1141 (YKGDKGDKGS…DKGDKGDKGD (235 aa)) shows a compositional bias: basic and acidic residues. Residues asparagine 1178, asparagine 1192, asparagine 1212, asparagine 1217, asparagine 1245, asparagine 1246, asparagine 1255, asparagine 1317, asparagine 1422, asparagine 1427, asparagine 1432, asparagine 1443, asparagine 1452, asparagine 1477, asparagine 1494, asparagine 1506, asparagine 1513, asparagine 1533, asparagine 1598, asparagine 1619, asparagine 1620, asparagine 1632, asparagine 1641, asparagine 1663, asparagine 1664, asparagine 1672, asparagine 1682, asparagine 1683, asparagine 1732, asparagine 1735, asparagine 1746, asparagine 1756, asparagine 1784, asparagine 1842, and asparagine 1934 are each glycosylated (N-linked (GlcNAc...) asparagine; by host).

May be hydroxylated on lysine by the viral-encoded procollagen-lysine,2-oxoglutarate 5-dioxygenase.

Its subcellular location is the virion. Functionally, may participate in the formation of a layer of cross-linked glycosylated fibrils at the viral surface thus giving it a hairy-like appearance. This Acanthamoeba polyphaga mimivirus (APMV) protein is Collagen-like protein 7.